Reading from the N-terminus, the 1222-residue chain is ATP-dependent helicase/nuclease subunit A (1222 aa).

A UvrD-like helicase ATP-binding domain is found at 39–495; the sequence is QKRTAQQIEA…ILLKENFRSQ (457 aa). 60–67 lines the ATP pocket; that stretch reads ASAGSGKT. Residues 524–810 enclose the UvrD-like helicase C-terminal domain; sequence QLIAGSHAQT…NLMTIHKSKG (287 aa).

Belongs to the helicase family. AddA subfamily. Heterodimer of AddA and AddB/RexB. Requires Mg(2+) as cofactor.

It catalyses the reaction Couples ATP hydrolysis with the unwinding of duplex DNA by translocating in the 3'-5' direction.. It carries out the reaction ATP + H2O = ADP + phosphate + H(+). Functionally, the heterodimer acts as both an ATP-dependent DNA helicase and an ATP-dependent, dual-direction single-stranded exonuclease. Recognizes the chi site generating a DNA molecule suitable for the initiation of homologous recombination. The AddA nuclease domain is required for chi fragment generation; this subunit has the helicase and 3' -&gt; 5' nuclease activities. This chain is ATP-dependent helicase/nuclease subunit A, found in Streptococcus pyogenes serotype M28 (strain MGAS6180).